We begin with the raw amino-acid sequence, 284 residues long: Spermidine/putrescine transport system permease protein PotC homolog (284 aa).

6 consecutive transmembrane segments (helical) span residues 13-33 (YFFL…LVSL), 76-96 (IIIG…SAFA), 116-136 (LATP…NTWL), 143-163 (GFFT…LILI), 189-209 (FFHI…LVVF), and 242-262 (AWAI…VCLI). The ABC transmembrane type-1 domain occupies 72–263 (LINSIIIGVI…ISVLGVCLIT (192 aa)).

Belongs to the binding-protein-dependent transport system permease family. CysTW subfamily.

Its subcellular location is the cell membrane. Functionally, required for the activity of the bacterial transport system of putrescine and spermidine. The chain is Spermidine/putrescine transport system permease protein PotC homolog (potC) from Mycoplasma genitalium (strain ATCC 33530 / DSM 19775 / NCTC 10195 / G37) (Mycoplasmoides genitalium).